The primary structure comprises 205 residues: 3-isopropylmalate dehydratase small subunit (205 aa).

This sequence belongs to the LeuD family. LeuD type 1 subfamily. As to quaternary structure, heterodimer of LeuC and LeuD.

It carries out the reaction (2R,3S)-3-isopropylmalate = (2S)-2-isopropylmalate. The protein operates within amino-acid biosynthesis; L-leucine biosynthesis; L-leucine from 3-methyl-2-oxobutanoate: step 2/4. Its function is as follows. Catalyzes the isomerization between 2-isopropylmalate and 3-isopropylmalate, via the formation of 2-isopropylmaleate. In Christiangramia forsetii (strain DSM 17595 / CGMCC 1.15422 / KT0803) (Gramella forsetii), this protein is 3-isopropylmalate dehydratase small subunit.